The primary structure comprises 259 residues: Ditrans,polycis-undecaprenyl-diphosphate synthase ((2E,6E)-farnesyl-diphosphate specific) (259 aa).

Asp-32 is an active-site residue. Asp-32 is a binding site for Mg(2+). Residues 33-36, Trp-37, Arg-45, His-49, and 77-79 each bind substrate; these read GNGR and STE. Asn-80 acts as the Proton acceptor in catalysis. Substrate contacts are provided by residues Trp-81, Arg-83, Arg-203, and 209 to 211; that span reads RIS. Glu-222 provides a ligand contact to Mg(2+).

The protein belongs to the UPP synthase family. As to quaternary structure, homodimer. Mg(2+) is required as a cofactor.

The catalysed reaction is 8 isopentenyl diphosphate + (2E,6E)-farnesyl diphosphate = di-trans,octa-cis-undecaprenyl diphosphate + 8 diphosphate. Its function is as follows. Catalyzes the sequential condensation of isopentenyl diphosphate (IPP) with (2E,6E)-farnesyl diphosphate (E,E-FPP) to yield (2Z,6Z,10Z,14Z,18Z,22Z,26Z,30Z,34E,38E)-undecaprenyl diphosphate (di-trans,octa-cis-UPP). UPP is the precursor of glycosyl carrier lipid in the biosynthesis of bacterial cell wall polysaccharide components such as peptidoglycan and lipopolysaccharide. This Lactiplantibacillus plantarum (strain ATCC BAA-793 / NCIMB 8826 / WCFS1) (Lactobacillus plantarum) protein is Ditrans,polycis-undecaprenyl-diphosphate synthase ((2E,6E)-farnesyl-diphosphate specific) (uppS).